The following is a 474-amino-acid chain: Aspartate ammonia-lyase (474 aa).

Residues Thr-105, Ser-144, Thr-145, Asn-146, and Thr-191 each coordinate L-aspartate. Residues 322–331 (GSSIMPGKVN) are SS loop. Ser-323 serves as the catalytic Proton acceptor. Positions 324 and 329 each coordinate L-aspartate.

It belongs to the class-II fumarase/aspartase family. Aspartase subfamily. In terms of assembly, homotetramer.

It carries out the reaction L-aspartate = fumarate + NH4(+). It catalyses the reaction L-phenylalanine = (E)-cinnamate + NH4(+). Does not require any divalent metal ion for activation of catalysis, but the activity is slightly increased in the presence of Mg(2+), Mn(2+), Ca(2+) or Co(2+). In terms of biological role, catalyzes the reversible conversion of L-aspartate to fumarate and ammonia. Can also utilize L-phenylalanine to form cinnamic acid. Exhibits the highest specific activity towards L-phenylalanine, but catalytic efficiency is 3-fold higher with L-aspartate. The sequence is that of Aspartate ammonia-lyase from Pseudomonas aeruginosa (strain ATCC 15692 / DSM 22644 / CIP 104116 / JCM 14847 / LMG 12228 / 1C / PRS 101 / PAO1).